A 100-amino-acid polypeptide reads, in one-letter code: Vesicle-associated membrane protein 8 (100 aa).

Residues 1 to 74 (MEASGSAGND…ARKFWWKNVK (74 aa)) lie on the Cytoplasmic side of the membrane. Phosphoserine occurs at positions 4 and 17. Residues 11-71 (RVRNLQSEVE…QKVARKFWWK (61 aa)) form the v-SNARE coiled-coil homology domain. 3 positions are modified to phosphothreonine: threonine 27, threonine 47, and threonine 53. Phosphoserine is present on serine 54. A helical; Anchor for type IV membrane protein membrane pass occupies residues 75 to 95 (MIVIICVIVLIILILIILFAT). The Vesicular portion of the chain corresponds to 96–100 (GTIPT).

This sequence belongs to the synaptobrevin family. As to quaternary structure, forms a SNARE complex composed of VAMP8, SNAP29 and STX17 involved in fusion of autophagosome with lysosome. Found in a number of SNARE complexes with NAPA, SNAP23, SNAP25, STX1A, STX4, STX7, STX8 and VTI1B. Interacts with PICALM. SNARE complex formation and binding by PICALM are mutually exclusive processes for VAMP8. Interacts with SBF2/MTMR13. Interacts with RAB21 (in GTP-bound form) in response to starvation; the interaction probably regulates VAMP8 endolysosomal trafficking. Interacts with STX17; this interaction is increased in the absence of TMEM39A. Interacts with TRIM6. In terms of tissue distribution, expressed (at protein level) at a high level in kidney, lung and spleen; at a lower level in testis, liver, brain and heart. Expressed in kidney and retinal pigment epithelium derived cell line.

It is found in the lysosome membrane. The protein resides in the late endosome membrane. The protein localises to the early endosome membrane. Its subcellular location is the midbody. It localises to the cell membrane. It is found in the zymogen granule membrane. Its function is as follows. SNAREs, soluble N-ethylmaleimide-sensitive factor-attachment protein receptors, are essential proteins for fusion of cellular membranes. SNAREs localized on opposing membranes assemble to form a trans-SNARE complex, an extended, parallel four alpha-helical bundle that drives membrane fusion. VAMP8 is a SNARE involved in autophagy through the direct control of autophagosome membrane fusion with the lysososome membrane via its interaction with the STX17-SNAP29 binary t-SNARE complex. Also required for dense-granule secretion in platelets. Also plays a role in regulated enzyme secretion in pancreatic acinar cells. Involved in the abscission of the midbody during cell division, which leads to completely separate daughter cells. Involved in the homotypic fusion of early and late endosomes. Also participates in the activation of type I interferon antiviral response through a TRIM6-dependent mechanism. In Rattus norvegicus (Rat), this protein is Vesicle-associated membrane protein 8.